We begin with the raw amino-acid sequence, 286 residues long: 4-diphosphocytidyl-2-C-methyl-D-erythritol kinase (286 aa).

Lys-13 is a catalytic residue. 96-106 is an ATP binding site; that stretch reads PMGGGIGGGSS. Asp-138 is a catalytic residue.

It belongs to the GHMP kinase family. IspE subfamily.

The catalysed reaction is 4-CDP-2-C-methyl-D-erythritol + ATP = 4-CDP-2-C-methyl-D-erythritol 2-phosphate + ADP + H(+). Its pathway is isoprenoid biosynthesis; isopentenyl diphosphate biosynthesis via DXP pathway; isopentenyl diphosphate from 1-deoxy-D-xylulose 5-phosphate: step 3/6. Catalyzes the phosphorylation of the position 2 hydroxy group of 4-diphosphocytidyl-2C-methyl-D-erythritol. In Pseudoalteromonas atlantica (strain T6c / ATCC BAA-1087), this protein is 4-diphosphocytidyl-2-C-methyl-D-erythritol kinase.